A 751-amino-acid polypeptide reads, in one-letter code: Kelch-like protein 1 (751 aa).

Low complexity-rich tracts occupy residues 25-36 and 74-90; these read PSPASSSPAGGS and SSSS…ASSS. Disordered regions lie at residues 25–54, 69–98, and 157–184; these read PSPA…GPSQ, FWKK…LNGT, and SSIQ…SDLD. Polar residues predominate over residues 170-184; the sequence is LTSTNHSLTPQSDLD. A BTB domain is found at 215-282; it reads CDVILIVGNR…AYTGCLELKE (68 aa). 6 Kelch repeats span residues 463-509, 510-556, 558-603, 604-650, 652-703, and 704-750; these read TLYA…VIDD, KLFV…VLEG, IYAV…ALNG, KLYS…TCDG, LYAV…LLGD, and RLYA…VIKQ.

In terms of tissue distribution, highly expressed in brain.

It localises to the cytoplasm. Its subcellular location is the cytoskeleton. Its function is as follows. May play a role in organizing the actin cytoskeleton of the brain cells. This chain is Kelch-like protein 1 (Klhl1), found in Mus musculus (Mouse).